We begin with the raw amino-acid sequence, 98 residues long: Small ribosomal subunit protein uS19 (98 aa).

Disordered stretches follow at residues 1 to 30 (MARS…KKSV) and 78 to 98 (RTFH…PAKK). Over residues 9-24 (PFADKHLTKKVEDANK) the composition is skewed to basic and acidic residues.

The protein belongs to the universal ribosomal protein uS19 family.

In terms of biological role, protein S19 forms a complex with S13 that binds strongly to the 16S ribosomal RNA. In Anaeromyxobacter dehalogenans (strain 2CP-C), this protein is Small ribosomal subunit protein uS19.